A 476-amino-acid chain; its full sequence is Cysteine--tRNA ligase (476 aa).

Residue Cys27 coordinates Zn(2+). Residues 29–39 (PTTYNYIHLGN) carry the 'HIGH' region motif. Zn(2+) contacts are provided by Cys207, His232, and Glu236. The 'KMSKS' region motif lies at 264-268 (KMSKS). Residue Lys267 coordinates ATP.

This sequence belongs to the class-I aminoacyl-tRNA synthetase family. Monomer. It depends on Zn(2+) as a cofactor.

It localises to the cytoplasm. It carries out the reaction tRNA(Cys) + L-cysteine + ATP = L-cysteinyl-tRNA(Cys) + AMP + diphosphate. This chain is Cysteine--tRNA ligase, found in Moorella thermoacetica (strain ATCC 39073 / JCM 9320).